A 267-amino-acid chain; its full sequence is GTP cyclohydrolase MptA (267 aa).

This sequence belongs to the GTP cyclohydrolase IV family. In terms of assembly, homodimer. The cofactor is Fe(2+).

The enzyme catalyses GTP + H2O = 7,8-dihydroneopterin 2',3'-cyclic phosphate + formate + diphosphate + H(+). It participates in cofactor biosynthesis; 5,6,7,8-tetrahydromethanopterin biosynthesis. Its function is as follows. Converts GTP to 7,8-dihydro-D-neopterin 2',3'-cyclic phosphate, the first intermediate in the biosynthesis of coenzyme methanopterin. This Thermococcus kodakarensis (strain ATCC BAA-918 / JCM 12380 / KOD1) (Pyrococcus kodakaraensis (strain KOD1)) protein is GTP cyclohydrolase MptA.